The chain runs to 134 residues: UPF0102 protein Adeh_1910 (134 aa).

This sequence belongs to the UPF0102 family.

This is UPF0102 protein Adeh_1910 from Anaeromyxobacter dehalogenans (strain 2CP-C).